The following is a 206-amino-acid chain: Large ribosomal subunit protein uL4 (206 aa).

The tract at residues 43 to 78 (ARSGNRKQKDREEVKHTTKKPWRQKGTGRARAGMSS) is disordered. A compositionally biased stretch (basic and acidic residues) spans 49–58 (KQKDREEVKH). The span at 59 to 70 (TTKKPWRQKGTG) shows a compositional bias: basic residues.

It belongs to the universal ribosomal protein uL4 family. As to quaternary structure, part of the 50S ribosomal subunit.

Its function is as follows. One of the primary rRNA binding proteins, this protein initially binds near the 5'-end of the 23S rRNA. It is important during the early stages of 50S assembly. It makes multiple contacts with different domains of the 23S rRNA in the assembled 50S subunit and ribosome. Forms part of the polypeptide exit tunnel. The chain is Large ribosomal subunit protein uL4 from Cupriavidus pinatubonensis (strain JMP 134 / LMG 1197) (Cupriavidus necator (strain JMP 134)).